The chain runs to 641 residues: Phosphomethylpyrimidine synthase (641 aa).

Residues 1 to 13 (MNIRSNPDTTRPA) are compositionally biased toward polar residues. The segment at 1–21 (MNIRSNPDTTRPAVTTGGLPS) is disordered. Substrate contacts are provided by residues asparagine 221, methionine 250, tyrosine 279, histidine 315, 335-337 (SRG), 376-379 (DGLR), and glutamate 415. Histidine 419 lines the Zn(2+) pocket. Residue tyrosine 442 coordinates substrate. Residue histidine 483 participates in Zn(2+) binding. Residues cysteine 563, cysteine 566, and cysteine 571 each coordinate [4Fe-4S] cluster.

It belongs to the ThiC family. In terms of assembly, homodimer. It depends on [4Fe-4S] cluster as a cofactor.

The catalysed reaction is 5-amino-1-(5-phospho-beta-D-ribosyl)imidazole + S-adenosyl-L-methionine = 4-amino-2-methyl-5-(phosphooxymethyl)pyrimidine + CO + 5'-deoxyadenosine + formate + L-methionine + 3 H(+). It functions in the pathway cofactor biosynthesis; thiamine diphosphate biosynthesis. Functionally, catalyzes the synthesis of the hydroxymethylpyrimidine phosphate (HMP-P) moiety of thiamine from aminoimidazole ribotide (AIR) in a radical S-adenosyl-L-methionine (SAM)-dependent reaction. The chain is Phosphomethylpyrimidine synthase from Rhodopseudomonas palustris (strain BisB5).